The sequence spans 189 residues: UPF0301 protein Cgl3084/cg3414 (189 aa).

The protein belongs to the UPF0301 (AlgH) family.

This is UPF0301 protein Cgl3084/cg3414 from Corynebacterium glutamicum (strain ATCC 13032 / DSM 20300 / JCM 1318 / BCRC 11384 / CCUG 27702 / LMG 3730 / NBRC 12168 / NCIMB 10025 / NRRL B-2784 / 534).